The following is a 108-amino-acid chain: MAKFIDERTFCYKCGMKVSPGIFHRCEKTTSFEPVVSDTYWCAYCKSTIRIIFDGRIRRCSNCGHDLHGGIANKIETVVHRDIESDKMLRRFMDPYSYSSVNKTNDRW.

This is an uncharacterized protein from Acanthamoeba polyphaga (Amoeba).